Here is a 301-residue protein sequence, read N- to C-terminus: Coiled-coil domain-containing protein 69-B (301 aa).

Positions 1–43 (MGSKTSKMCCPQLRKKKRQKAHKEGPSSQELNDLNAKSQGPNE) are disordered. Residue glycine 2 is the site of N-myristoyl glycine attachment. Polar residues predominate over residues 26-41 (PSSQELNDLNAKSQGP). 2 coiled-coil regions span residues 42–167 (NELL…SILS) and 213–281 (KSTM…NLYR).

The protein belongs to the CCDC69 family.

Its subcellular location is the cytoplasm. The protein resides in the cytoskeleton. It localises to the spindle. The protein localises to the midbody. Its function is as follows. May act as a scaffold to regulate the recruitment and assembly of spindle midzone components. The polypeptide is Coiled-coil domain-containing protein 69-B (ccdc69-b) (Xenopus laevis (African clawed frog)).